The sequence spans 484 residues: Carbohydrate sulfotransferase 7 (484 aa).

Residues 1–12 (MKGRRRRRREYC) are Cytoplasmic-facing. Residues 13–33 (KFTLLLALYTLLLLLVPSVLD) traverse the membrane as a helical; Signal-anchor for type II membrane protein segment. Topologically, residues 34-484 (SHSEQDKGRN…PLETKANWAV (451 aa)) are lumenal. A disordered region spans residues 71–90 (RSLAEGNPDRSPGSPGNLSA). N-linked (GlcNAc...) asparagine glycosylation is present at Asn-87. Position 108–114 (108–114 (WRTGSSF)) interacts with 3'-phosphoadenylyl sulfate. A glycan (N-linked (GlcNAc...) asparagine) is linked at Asn-184. 276–284 (RDPRAVHNS) lines the 3'-phosphoadenylyl sulfate pocket. An N-linked (GlcNAc...) asparagine glycan is attached at Asn-405. The residue at position 460 (Ser-460) is a Phosphoserine. Basic and acidic residues predominate over residues 460–473 (SGDERDRKTVREGE). The disordered stretch occupies residues 460–484 (SGDERDRKTVREGETPLETKANWAV).

It belongs to the sulfotransferase 1 family. Gal/GlcNAc/GalNAc subfamily. Widely expressed. Highly expressed in kidney. Expressed at lower level in heart, lung and liver.

It is found in the golgi apparatus membrane. It catalyses the reaction chondroitin beta-D-glucuronate + n 3'-phosphoadenylyl sulfate = chondroitin 6'-sulfate + n adenosine 3',5'-bisphosphate + n H(+). Its function is as follows. Sulfotransferase that utilizes 3'-phospho-5'-adenylyl sulfate (PAPS) as sulfonate donor to catalyze the transfer of sulfate to position 6 of non-reducing N-acetylglucosamine (GlcNAc) residues. Preferentially acts on mannose-linked GlcNAc. Also able to catalyze the transfer of sulfate to position 6 of the N-acetylgalactosamine (GalNAc) residue of chondroitin. Also acts on core 2 mucin-type oligosaccharide and N-acetyllactosamine oligomer with a lower efficiency. Has weak or no activity toward keratan sulfate and oligosaccharides containing the Galbeta1-4GlcNAc. Catalyzes 6-O-sulfation of beta-benzyl GlcNAc but not alpha- or beta-benzyl GalNAc. The protein is Carbohydrate sulfotransferase 7 (Chst7) of Mus musculus (Mouse).